The chain runs to 578 residues: Suppressor of smlA (578 aa).

Its function is as follows. Involved in regulation of group size of aggregation streams. The polypeptide is Suppressor of smlA (sslA1) (Dictyostelium discoideum (Social amoeba)).